The sequence spans 126 residues: Iron-sulfur cluster insertion protein ErpA (126 aa).

Residues 1 to 21 (MNQPANQFNPSSSQPVDPTVL) form a disordered region. The iron-sulfur cluster site is built by Cys-54, Cys-118, and Cys-120.

This sequence belongs to the HesB/IscA family. Homodimer. The cofactor is iron-sulfur cluster.

Its function is as follows. Required for insertion of 4Fe-4S clusters for at least IspG. The chain is Iron-sulfur cluster insertion protein ErpA from Psychrobacter arcticus (strain DSM 17307 / VKM B-2377 / 273-4).